We begin with the raw amino-acid sequence, 57 residues long: Small ribosomal subunit protein bS21 (57 aa).

The tract at residues Arg35–Arg57 is disordered.

This sequence belongs to the bacterial ribosomal protein bS21 family.

In Thermosynechococcus vestitus (strain NIES-2133 / IAM M-273 / BP-1), this protein is Small ribosomal subunit protein bS21.